Consider the following 375-residue polypeptide: Succinyl-diaminopimelate desuccinylase (375 aa).

Histidine 66 serves as a coordination point for Zn(2+). Aspartate 68 is a catalytic residue. A Zn(2+)-binding site is contributed by aspartate 99. Catalysis depends on glutamate 133, which acts as the Proton acceptor. Positions 134, 162, and 348 each coordinate Zn(2+).

This sequence belongs to the peptidase M20A family. DapE subfamily. Homodimer. Requires Zn(2+) as cofactor. It depends on Co(2+) as a cofactor.

The catalysed reaction is N-succinyl-(2S,6S)-2,6-diaminopimelate + H2O = (2S,6S)-2,6-diaminopimelate + succinate. It functions in the pathway amino-acid biosynthesis; L-lysine biosynthesis via DAP pathway; LL-2,6-diaminopimelate from (S)-tetrahydrodipicolinate (succinylase route): step 3/3. Functionally, catalyzes the hydrolysis of N-succinyl-L,L-diaminopimelic acid (SDAP), forming succinate and LL-2,6-diaminopimelate (DAP), an intermediate involved in the bacterial biosynthesis of lysine and meso-diaminopimelic acid, an essential component of bacterial cell walls. This is Succinyl-diaminopimelate desuccinylase from Citrobacter koseri (strain ATCC BAA-895 / CDC 4225-83 / SGSC4696).